Here is a 155-residue protein sequence, read N- to C-terminus: 3-hydroxyacyl-[acyl-carrier-protein] dehydratase FabZ (155 aa).

His-57 is a catalytic residue.

It belongs to the thioester dehydratase family. FabZ subfamily.

It localises to the cytoplasm. The catalysed reaction is a (3R)-hydroxyacyl-[ACP] = a (2E)-enoyl-[ACP] + H2O. Functionally, involved in unsaturated fatty acids biosynthesis. Catalyzes the dehydration of short chain beta-hydroxyacyl-ACPs and long chain saturated and unsaturated beta-hydroxyacyl-ACPs. This chain is 3-hydroxyacyl-[acyl-carrier-protein] dehydratase FabZ, found in Cereibacter sphaeroides (strain ATCC 17025 / ATH 2.4.3) (Rhodobacter sphaeroides).